Consider the following 328-residue polypeptide: WUSCHEL-related homeobox 6 (328 aa).

A compositionally biased stretch (polar residues) spans 1–11 (MEGSSNSPDRQ). Positions 1–45 (MEGSSNSPDRQSSGGSPPEERGGGGSGGGGGRSAAGEPVRSRWTP) are disordered. A compositionally biased stretch (gly residues) spans 23–33 (GGGSGGGGGRS). The homeobox; WUS-type DNA-binding region spans 38 to 102 (PVRSRWTPKP…NRRSRSRRRQ (65 aa)).

This sequence belongs to the WUS homeobox family.

Its subcellular location is the nucleus. In terms of biological role, transcription factor which may be involved in developmental processes. The chain is WUSCHEL-related homeobox 6 (WOX6) from Oryza sativa subsp. indica (Rice).